The primary structure comprises 174 residues: Crossover junction endodeoxyribonuclease RuvC (174 aa).

Residues aspartate 16, glutamate 76, and aspartate 148 contribute to the active site. Residues aspartate 16, glutamate 76, and aspartate 148 each coordinate Mg(2+).

This sequence belongs to the RuvC family. As to quaternary structure, homodimer which binds Holliday junction (HJ) DNA. The HJ becomes 2-fold symmetrical on binding to RuvC with unstacked arms; it has a different conformation from HJ DNA in complex with RuvA. In the full resolvosome a probable DNA-RuvA(4)-RuvB(12)-RuvC(2) complex forms which resolves the HJ. It depends on Mg(2+) as a cofactor.

The protein resides in the cytoplasm. It catalyses the reaction Endonucleolytic cleavage at a junction such as a reciprocal single-stranded crossover between two homologous DNA duplexes (Holliday junction).. Functionally, the RuvA-RuvB-RuvC complex processes Holliday junction (HJ) DNA during genetic recombination and DNA repair. Endonuclease that resolves HJ intermediates. Cleaves cruciform DNA by making single-stranded nicks across the HJ at symmetrical positions within the homologous arms, yielding a 5'-phosphate and a 3'-hydroxyl group; requires a central core of homology in the junction. The consensus cleavage sequence is 5'-(A/T)TT(C/G)-3'. Cleavage occurs on the 3'-side of the TT dinucleotide at the point of strand exchange. HJ branch migration catalyzed by RuvA-RuvB allows RuvC to scan DNA until it finds its consensus sequence, where it cleaves and resolves the cruciform DNA. This is Crossover junction endodeoxyribonuclease RuvC from Rhodopseudomonas palustris (strain BisA53).